Consider the following 183-residue polypeptide: dTTP/UTP pyrophosphatase (183 aa).

Asp-64 functions as the Proton acceptor in the catalytic mechanism.

This sequence belongs to the Maf family. YhdE subfamily. The cofactor is a divalent metal cation.

Its subcellular location is the cytoplasm. It carries out the reaction dTTP + H2O = dTMP + diphosphate + H(+). It catalyses the reaction UTP + H2O = UMP + diphosphate + H(+). In terms of biological role, nucleoside triphosphate pyrophosphatase that hydrolyzes dTTP and UTP. May have a dual role in cell division arrest and in preventing the incorporation of modified nucleotides into cellular nucleic acids. This is dTTP/UTP pyrophosphatase from Acinetobacter baylyi (strain ATCC 33305 / BD413 / ADP1).